Here is a 419-residue protein sequence, read N- to C-terminus: RING finger protein 150 (419 aa).

Positions 1 to 34 are cleaved as a signal peptide; it reads MALSVIQACRSLALSTWLLSFCFVHLLCLDFTVA. The Extracellular portion of the chain corresponds to 35–197; the sequence is EKEEWYTAFV…NLQKYVSRTS (163 aa). Residues 70-172 form the PA domain; that stretch reads SLKREARGVL…PKGRELVLLM (103 aa). A helical transmembrane segment spans residues 198 to 218; it reads VVFVSISFIILMIISLAWLVF. Residues 219-419 are Cytoplasmic-facing; it reads YYIQRFRYAN…IDTPTDDPKC (201 aa). Residues 267 to 308 form an RING-type; atypical zinc finger; it reads CAVCIEGYKPNDVVRILPCRHLFHKCCVDPWLVDHRTCPMCK. The segment at 374–419 is disordered; sequence SEPLSQDTMPTEQSELQPIASGSSDVSLTTGAGHSDIDTPTDDPKC. Residues 376 to 405 show a composition bias toward polar residues; the sequence is PLSQDTMPTEQSELQPIASGSSDVSLTTGA.

It localises to the membrane. This chain is RING finger protein 150 (rnf150), found in Danio rerio (Zebrafish).